The sequence spans 432 residues: Hexane cyclase pydB (432 aa).

An N-terminal signal peptide occupies residues 1-20 (MMHQSLGLGLVVFVAAPVVA). Asn59, Asn78, Asn153, and Asn308 each carry an N-linked (GlcNAc...) asparagine glycan.

This sequence belongs to the Diels-Alderase family.

The protein operates within mycotoxin biosynthesis. Its function is as follows. Hexane cyclase; part of the gene cluster that mediates the biosynthesis of pyrrocidines, fungal natural products containing a macrocyclic para-cyclophane connected to a decahydrofluorene ring system that show potent antibiotic activities toward Gram-negative bacteria. Within the pathway, pydB functions synergistically with pydE, pydX and pydZ to form the cyclophane. The pathway begins with the PKS-NRPS pydA which, with the help of the trans-enoyl reductase pydC, synthesizes the polyketide-tyrosyl acyl thioester product which can be reductively off-loaded by the terminal reductase (R) domain in pydA. The alpha/beta hydrolase pydG is then required to catalyze the subsequent Knoevenagel condensation that affords the 3-pyrrolin-2-one ring, whereas the four proteins pydB, pydE, pydX and pydZ then function synergistically to form the cyclophane. PydB and the membrane-bound pydX and pydZ are lipid-binding proteins that can sequester and mold the pdyG product into the inverse S-shape. Binding of the medium chain reductase pydE to the complex would trigger the cascade oxidative cyclization. PydY is involved the Diels-Alder cycloaddition that forms the decahydrofluorene core. Additional non-enzymatic hydroxylation yields pyrrocidine A2 which can be further reduced into pyrrocidine B by an endogenous reductase. This chain is Hexane cyclase pydB, found in Acremonium sp.